We begin with the raw amino-acid sequence, 310 residues long: Thiamine-monophosphate kinase (310 aa).

Residues Asp26, Thr40, Ser41, and Asp42 each contribute to the Mg(2+) site. Asp49 provides a ligand contact to substrate. 2 residues coordinate Mg(2+): Asp70 and Asp118. ATP is bound by residues 117 to 118 and Arg141; that span reads GD. Asp202 contributes to the Mg(2+) binding site. Ser204 contributes to the ATP binding site. A Mg(2+)-binding site is contributed by Asp205. Positions 251 and 299 each coordinate substrate.

It belongs to the thiamine-monophosphate kinase family.

The catalysed reaction is thiamine phosphate + ATP = thiamine diphosphate + ADP. The protein operates within cofactor biosynthesis; thiamine diphosphate biosynthesis; thiamine diphosphate from thiamine phosphate: step 1/1. Functionally, catalyzes the ATP-dependent phosphorylation of thiamine-monophosphate (TMP) to form thiamine-pyrophosphate (TPP), the active form of vitamin B1. The chain is Thiamine-monophosphate kinase from Pyrococcus abyssi (strain GE5 / Orsay).